A 362-amino-acid polypeptide reads, in one-letter code: MLCVNVELQERRYPILIGSGLLQDERSYPIKRGDRVMIVTNPTVAQFYLDTVIYALEKRGCVVDHVLLPDGEKYKTLESLNLIFTALLQGNHGRDTTIIALGGGVIGDVAGFAAASYQRGVRLIQIPTTLLSQVDSSVGGKTAVNHELGKNMIGAFYQPSMVIIDTLTLNTLPKREVNAGLAEVIKYGAILDYEFFEWLEQHIDELVALHPEALQHCISRCCQIKADVVARDETEKGDRALLNLGHTFGHAIETHLGYGNWLHGEAVSTGMMMAAALSEELGDISIADVSRLEKLLARANLPTVSPDTMQPEDYLPHMMRDKKVLSGKLRLVLLKSLGQAYVANDTEHTLVLNAIRRCTQTD.

NAD(+) contacts are provided by residues 70-75 (DGEKYK), 104-108 (GVIGD), 128-129 (TT), K141, K150, and 168-171 (TLNT). Zn(2+)-binding residues include E183, H246, and H263.

Belongs to the sugar phosphate cyclases superfamily. Dehydroquinate synthase family. Requires NAD(+) as cofactor. It depends on Co(2+) as a cofactor. Zn(2+) serves as cofactor.

It localises to the cytoplasm. It catalyses the reaction 7-phospho-2-dehydro-3-deoxy-D-arabino-heptonate = 3-dehydroquinate + phosphate. The protein operates within metabolic intermediate biosynthesis; chorismate biosynthesis; chorismate from D-erythrose 4-phosphate and phosphoenolpyruvate: step 2/7. Catalyzes the conversion of 3-deoxy-D-arabino-heptulosonate 7-phosphate (DAHP) to dehydroquinate (DHQ). This is 3-dehydroquinate synthase from Haemophilus influenzae (strain ATCC 51907 / DSM 11121 / KW20 / Rd).